The primary structure comprises 249 residues: Probable transcriptional regulatory protein CYA_2259 (249 aa).

The protein belongs to the TACO1 family.

The protein resides in the cytoplasm. The protein is Probable transcriptional regulatory protein CYA_2259 of Synechococcus sp. (strain JA-3-3Ab) (Cyanobacteria bacterium Yellowstone A-Prime).